The chain runs to 169 residues: Cell cycle link protein (169 aa).

Residues 9–22 (LPEELRQKIVHDHL) are binding to host SKP1 protein. The LXCXE motif, interaction with host RBR signature appears at 110 to 114 (LLCRE).

Belongs to the nanovirus Clink protein family. As to quaternary structure, interacts with host SKP1. Interacts (via LXCXE domain) with host retinoblastoma-related protein 1 (RBR1). Interacts (via LXCXE domain) with retinoblastoma-related proteins (RBR).

Interacts with and disrupts the function of host retinoblastoma-related proteins RBR, which are key regulators of the cell cycle. Induces transcriptional activation of E2F-regulated S-phase and G2/M-phase-specific genes. Inactivation of the ability of RBR to arrest the cell cycle leads to the stimulation of viral DNA replication. The protein is Cell cycle link protein (DNA-C) of Cicer arietinum (Chickpea).